Here is a 1162-residue protein sequence, read N- to C-terminus: ATP-dependent helicase/deoxyribonuclease subunit B (1162 aa).

The UvrD-like helicase ATP-binding domain maps to 1–275; that stretch reads MELNAYIGRA…QFFKQQYRFN (275 aa). Residue 8–15 coordinates ATP; that stretch reads GRAGTGKS. The UvrD-like helicase C-terminal domain occupies 269–583; the sequence is KQQYRFNNKD…SIGTMDLAKV (315 aa). [4Fe-4S] cluster is bound by residues cysteine 784, cysteine 1117, cysteine 1120, and cysteine 1126.

Belongs to the helicase family. AddB/RexB type 1 subfamily. Heterodimer of AddA and AddB. Mg(2+) serves as cofactor. It depends on [4Fe-4S] cluster as a cofactor.

In terms of biological role, the heterodimer acts as both an ATP-dependent DNA helicase and an ATP-dependent, dual-direction single-stranded exonuclease. Recognizes the chi site generating a DNA molecule suitable for the initiation of homologous recombination. The AddB subunit has 5' -&gt; 3' nuclease activity but not helicase activity. The protein is ATP-dependent helicase/deoxyribonuclease subunit B of Staphylococcus haemolyticus (strain JCSC1435).